Consider the following 1465-residue polypeptide: Transcriptional elongation regulator MINIYO (1465 aa).

Disordered stretches follow at residues 27-85, 186-211, and 1113-1135; these read KGIS…AEER, LNASPPLAVSNGLGTRHASSSLESDI, and TIHEDGEMSNSSTQDKKSDSSTI.

Belongs to the RPAP1 family. As to quaternary structure, interacts with HAG3, NRPB3 and NRPB10L. As to expression, expressed in root and shoot apices and in leaf and flower primordia. Detected in the endosperm, embryo, meristems and in organ primordia, but not in mature cells. Found exclusively in the vascular bundles in mature leaves.

The protein resides in the cytoplasm. It is found in the nucleus. In terms of biological role, positive regulator of transcriptional elongation that is essential for cells to initiate differentiation. Interacts with RNA polymerase II and the Elongator complex and is required to sustain global levels of transcriptional elongation activity, specifically in differentiating tissues. This chain is Transcriptional elongation regulator MINIYO, found in Arabidopsis thaliana (Mouse-ear cress).